Consider the following 419-residue polypeptide: Glutamyl-tRNA reductase (419 aa).

Substrate-binding positions include 49–52 (TCNR), Ser-107, 112–114 (EPQ), and Gln-118. Residue Cys-50 is the Nucleophile of the active site. 187 to 192 (GAGETI) contributes to the NADP(+) binding site.

This sequence belongs to the glutamyl-tRNA reductase family. In terms of assembly, homodimer.

It catalyses the reaction (S)-4-amino-5-oxopentanoate + tRNA(Glu) + NADP(+) = L-glutamyl-tRNA(Glu) + NADPH + H(+). The protein operates within porphyrin-containing compound metabolism; protoporphyrin-IX biosynthesis; 5-aminolevulinate from L-glutamyl-tRNA(Glu): step 1/2. Functionally, catalyzes the NADPH-dependent reduction of glutamyl-tRNA(Glu) to glutamate 1-semialdehyde (GSA). The protein is Glutamyl-tRNA reductase of Vibrio atlanticus (strain LGP32) (Vibrio splendidus (strain Mel32)).